The sequence spans 172 residues: Crossover junction endodeoxyribonuclease RuvC (172 aa).

Catalysis depends on residues aspartate 12, glutamate 71, and aspartate 143. Aspartate 12, glutamate 71, and aspartate 143 together coordinate Mg(2+).

It belongs to the RuvC family. In terms of assembly, homodimer which binds Holliday junction (HJ) DNA. The HJ becomes 2-fold symmetrical on binding to RuvC with unstacked arms; it has a different conformation from HJ DNA in complex with RuvA. In the full resolvosome a probable DNA-RuvA(4)-RuvB(12)-RuvC(2) complex forms which resolves the HJ. Mg(2+) is required as a cofactor.

The protein localises to the cytoplasm. It carries out the reaction Endonucleolytic cleavage at a junction such as a reciprocal single-stranded crossover between two homologous DNA duplexes (Holliday junction).. Functionally, the RuvA-RuvB-RuvC complex processes Holliday junction (HJ) DNA during genetic recombination and DNA repair. Endonuclease that resolves HJ intermediates. Cleaves cruciform DNA by making single-stranded nicks across the HJ at symmetrical positions within the homologous arms, yielding a 5'-phosphate and a 3'-hydroxyl group; requires a central core of homology in the junction. The consensus cleavage sequence is 5'-(A/T)TT(C/G)-3'. Cleavage occurs on the 3'-side of the TT dinucleotide at the point of strand exchange. HJ branch migration catalyzed by RuvA-RuvB allows RuvC to scan DNA until it finds its consensus sequence, where it cleaves and resolves the cruciform DNA. This Coxiella burnetii (strain CbuK_Q154) (Coxiella burnetii (strain Q154)) protein is Crossover junction endodeoxyribonuclease RuvC.